Here is a 208-residue protein sequence, read N- to C-terminus: uncharacterized protein (208 aa).

Positions 1 to 18 (MSPTKDSHPSPHFPRDSG) are enriched in basic and acidic residues. Disordered stretches follow at residues 1 to 122 (MSPT…LPPP) and 135 to 208 (RECH…TPDG).

This is an uncharacterized protein from Homo sapiens (Human).